The primary structure comprises 97 residues: Co-chaperonin GroES (97 aa).

This sequence belongs to the GroES chaperonin family. As to quaternary structure, heptamer of 7 subunits arranged in a ring. Interacts with the chaperonin GroEL.

The protein localises to the cytoplasm. Together with the chaperonin GroEL, plays an essential role in assisting protein folding. The GroEL-GroES system forms a nano-cage that allows encapsulation of the non-native substrate proteins and provides a physical environment optimized to promote and accelerate protein folding. GroES binds to the apical surface of the GroEL ring, thereby capping the opening of the GroEL channel. This chain is Co-chaperonin GroES, found in Pseudomonas aeruginosa (strain LESB58).